We begin with the raw amino-acid sequence, 485 residues long: GTPase Obg (485 aa).

The Obg domain maps to 2-159; that stretch reads PRFVDRVVIH…RELTLELKTV (158 aa). One can recognise an OBG-type G domain in the interval 160–341; sequence ADVGLIGFPS…FIFALWDMVR (182 aa). GTP-binding positions include 166–173, 191–195, 212–215, 292–295, and 322–324; these read GFPSAGKS, FTTLV, DVPG, NKID, and STV. Positions 173 and 193 each coordinate Mg(2+). The OCT domain occupies 359-437; it reads PIAVDETGFS…IGDMTFDWEP (79 aa). Residues 439–485 are disordered; that stretch reads TPAGVDVQMSGRGTDTRLEQTDRVSAAERKIARRERRQSTDEPGGEE. The span at 452–468 shows a compositional bias: basic and acidic residues; sequence TDTRLEQTDRVSAAERK.

The protein belongs to the TRAFAC class OBG-HflX-like GTPase superfamily. OBG GTPase family. As to quaternary structure, monomer. Mg(2+) is required as a cofactor.

The protein resides in the cytoplasm. Functionally, an essential GTPase which binds GTP, GDP and possibly (p)ppGpp with moderate affinity, with high nucleotide exchange rates and a fairly low GTP hydrolysis rate. Plays a role in control of the cell cycle, stress response, ribosome biogenesis and in those bacteria that undergo differentiation, in morphogenesis control. This Mycobacterium sp. (strain MCS) protein is GTPase Obg.